A 428-amino-acid chain; its full sequence is MSRSSDLFHKAQTIIPGGVNSPVRAFKGVGGEPVFFKSGKGAYLTDVDDKQYIDYVGSWGPLILGHCHPKVIEAVDNVLHSGMSFGAPTELEIQLAEKIASLMPSIEKIRMVNSGTEATMTAIRLARGFTNKNKFIKFNGCYHGHSDSLLVKAGSGLLTLGIPSTPGIPKSITEHTLTADFNNLEQVAQLFEKYPNDIATVILEPVPGNMGFILPKIEFLKGLRELCDQYNALLIFDEVMTGFRVGLHGAQGLFGIKPDITTLGKIIGGGMPVGALGGKREIMSFLAPEGPVYQAGTLSGNPLAMAAGLATLKEIEKINFFEDLSNTTNKLTEALADAAENANIPFFAASLGGMFGFCFTDKNSVENYFDVASSDEVLFKKFFHAMLAQGVYFAPSMYEAGFVSSMHGDLEIQKTYDAAELVLNQLSA.

Lysine 265 is modified (N6-(pyridoxal phosphate)lysine).

The protein belongs to the class-III pyridoxal-phosphate-dependent aminotransferase family. HemL subfamily. As to quaternary structure, homodimer. The cofactor is pyridoxal 5'-phosphate.

The protein resides in the cytoplasm. The catalysed reaction is (S)-4-amino-5-oxopentanoate = 5-aminolevulinate. It participates in porphyrin-containing compound metabolism; protoporphyrin-IX biosynthesis; 5-aminolevulinate from L-glutamyl-tRNA(Glu): step 2/2. In Legionella pneumophila (strain Paris), this protein is Glutamate-1-semialdehyde 2,1-aminomutase.